The following is a 308-amino-acid chain: Oxygen-dependent coproporphyrinogen-III oxidase (308 aa).

A substrate-binding site is contributed by Ser100. The a divalent metal cation site is built by His104 and His114. His114 acts as the Proton donor in catalysis. Position 116 to 118 (116 to 118 (NFR)) interacts with substrate. Positions 153 and 183 each coordinate a divalent metal cation. Positions 248 to 283 (YVEFNLVFDRGTIFGLQSGGRTESILSSMPPMATWK) are important for dimerization. Position 266–268 (266–268 (GGR)) interacts with substrate.

Belongs to the aerobic coproporphyrinogen-III oxidase family. Homodimer. The cofactor is a divalent metal cation.

It is found in the cytoplasm. The catalysed reaction is coproporphyrinogen III + O2 + 2 H(+) = protoporphyrinogen IX + 2 CO2 + 2 H2O. Its pathway is porphyrin-containing compound metabolism; protoporphyrin-IX biosynthesis; protoporphyrinogen-IX from coproporphyrinogen-III (O2 route): step 1/1. Functionally, involved in the heme biosynthesis. Catalyzes the aerobic oxidative decarboxylation of propionate groups of rings A and B of coproporphyrinogen-III to yield the vinyl groups in protoporphyrinogen-IX. The chain is Oxygen-dependent coproporphyrinogen-III oxidase from Francisella tularensis subsp. holarctica (strain OSU18).